Consider the following 449-residue polypeptide: Glucose-6-phosphate isomerase (449 aa).

Catalysis depends on E291, which acts as the Proton donor. Residues H312 and K426 contribute to the active site.

Belongs to the GPI family.

Its subcellular location is the cytoplasm. It catalyses the reaction alpha-D-glucose 6-phosphate = beta-D-fructose 6-phosphate. The protein operates within carbohydrate biosynthesis; gluconeogenesis. It functions in the pathway carbohydrate degradation; glycolysis; D-glyceraldehyde 3-phosphate and glycerone phosphate from D-glucose: step 2/4. Functionally, catalyzes the reversible isomerization of glucose-6-phosphate to fructose-6-phosphate. This is Glucose-6-phosphate isomerase from Streptococcus pyogenes serotype M1.